A 101-amino-acid polypeptide reads, in one-letter code: Urease subunit beta (101 aa).

This sequence belongs to the urease beta subunit family. Heterotrimer of UreA (gamma), UreB (beta) and UreC (alpha) subunits. Three heterotrimers associate to form the active enzyme.

It localises to the cytoplasm. It catalyses the reaction urea + 2 H2O + H(+) = hydrogencarbonate + 2 NH4(+). The protein operates within nitrogen metabolism; urea degradation; CO(2) and NH(3) from urea (urease route): step 1/1. This Allorhizobium ampelinum (strain ATCC BAA-846 / DSM 112012 / S4) (Agrobacterium vitis (strain S4)) protein is Urease subunit beta.